The sequence spans 210 residues: MEAQSSSRQVTGPLYLGVKEDWEEQHDVKAEAFLQAGEGRKEKGAQGQPGVGAVGKEGEGEELSGGEGQFGPGAPGPMGDEDKDGGTRAGGVEEEQNEPAAEGTESQKNGKPEDRQMPLQGSRFAQQRLSELQSILQRTNSFDVPREDLYRLMDTCVARVQNWFKIRRAAARRNRRRTTPVPEHFRGTFECPACRGVRWGERCPFATPRF.

The segment at 29 to 117 is disordered; it reads KAEAFLQAGE…KNGKPEDRQM (89 aa). Positions 117–175 form a DNA-binding region, homeobox; atypical; sequence MPLQGSRFAQQRLSELQSILQRTNSFDVPREDLYRLMDTCVARVQNWFKIRRAAARRNR.

Its subcellular location is the nucleus. Functionally, transcription factor required for differentiation of embryonic stem cells (ESCs) into primordial germ cells. This is Homeobox protein Rhox5 (Rhox5) from Mus minutoides (Southern African pygmy mouse).